The chain runs to 250 residues: Type III pantothenate kinase (250 aa).

Residue 13–20 (DVGNSYLK) coordinates ATP. 110 to 113 (GNDL) provides a ligand contact to substrate. D112 (proton acceptor) is an active-site residue. An ATP-binding site is contributed by T134. T186 is a binding site for substrate.

The protein belongs to the type III pantothenate kinase family. Homodimer. NH4(+) serves as cofactor. It depends on K(+) as a cofactor.

It localises to the cytoplasm. The catalysed reaction is (R)-pantothenate + ATP = (R)-4'-phosphopantothenate + ADP + H(+). Its pathway is cofactor biosynthesis; coenzyme A biosynthesis; CoA from (R)-pantothenate: step 1/5. Its function is as follows. Catalyzes the phosphorylation of pantothenate (Pan), the first step in CoA biosynthesis. This Mycoplasmopsis synoviae (strain 53) (Mycoplasma synoviae) protein is Type III pantothenate kinase.